The sequence spans 515 residues: Putative BTB/POZ domain-containing protein At3g49970 (515 aa).

Positions methionine 1–threonine 63 constitute a BTB domain. An NPH3 domain is found at aspartate 149 to alanine 409. Tyrosine 350 is modified (phosphotyrosine). Positions glutamine 395–glutamate 417 are disordered. A coiled-coil region spans residues leucine 418–glutamate 452. The tract at residues isoleucine 494–serine 515 is disordered.

This sequence belongs to the NPH3 family.

The protein operates within protein modification; protein ubiquitination. In terms of biological role, may act as a substrate-specific adapter of an E3 ubiquitin-protein ligase complex (CUL3-RBX1-BTB) which mediates the ubiquitination and subsequent proteasomal degradation of target proteins. In Arabidopsis thaliana (Mouse-ear cress), this protein is Putative BTB/POZ domain-containing protein At3g49970.